The sequence spans 159 residues: Deoxyuridine 5'-triphosphate nucleotidohydrolase (159 aa).

8 residues coordinate dUMP: Ser79, Gly92, Asp95, Tyr98, Lys103, Arg148, Phe153, and Gly154.

The protein belongs to the dUTPase family. As to quaternary structure, homotrimer. The cofactor is Mg(2+).

It carries out the reaction dUTP + H2O = dUMP + diphosphate + H(+). It functions in the pathway pyrimidine metabolism; dUMP biosynthesis; dUMP from dCTP (dUTP route): step 2/2. Its function is as follows. Involved in nucleotide metabolism via production of dUMP, the immediate precursor of thymidine nucleotides, and decreases the intracellular concentration of dUTP so that uracil cannot be incorporated into DNA. This chain is Deoxyuridine 5'-triphosphate nucleotidohydrolase (DUT1), found in Candida albicans (strain SC5314 / ATCC MYA-2876) (Yeast).